A 305-amino-acid polypeptide reads, in one-letter code: Tyrosine recombinase XerC (305 aa).

In terms of domain architecture, Core-binding (CB) spans 1–94; it reads MSSVDEFLTY…ACRSYYAWLL (94 aa). The 178-residue stretch at 115 to 292 folds into the Tyr recombinase domain; the sequence is KLPQVLDADE…DFQHLAKVYD (178 aa). Residues arginine 154, lysine 178, histidine 244, arginine 247, and histidine 270 contribute to the active site. Residue tyrosine 279 is the O-(3'-phospho-DNA)-tyrosine intermediate of the active site.

It belongs to the 'phage' integrase family. XerC subfamily. In terms of assembly, forms a cyclic heterotetrameric complex composed of two molecules of XerC and two molecules of XerD.

The protein localises to the cytoplasm. In terms of biological role, site-specific tyrosine recombinase, which acts by catalyzing the cutting and rejoining of the recombining DNA molecules. The XerC-XerD complex is essential to convert dimers of the bacterial chromosome into monomers to permit their segregation at cell division. It also contributes to the segregational stability of plasmids. The polypeptide is Tyrosine recombinase XerC (Xanthomonas axonopodis pv. citri (strain 306)).